A 151-amino-acid polypeptide reads, in one-letter code: MSDDWVEIYTDGACKGNPGPGGWGALLIYKGVKRELWGGEPDTTNNRMELMAAIRALAELKRPCKVRLVTDSQYVMQGINDWMPNWKKRGWKTASKQPVKNADLWQQLDEQVNRHEVSWQWVRGHTGHPGNEQADLLANRGVVQAKRQPIV.

An RNase H type-1 domain is found at 2–143; sequence SDDWVEIYTD…ADLLANRGVV (142 aa). The Mg(2+) site is built by D11, E49, D71, and D135.

It belongs to the RNase H family. As to quaternary structure, monomer. Requires Mg(2+) as cofactor.

Its subcellular location is the cytoplasm. The enzyme catalyses Endonucleolytic cleavage to 5'-phosphomonoester.. In terms of biological role, endonuclease that specifically degrades the RNA of RNA-DNA hybrids. The polypeptide is Ribonuclease H (Stutzerimonas stutzeri (strain A1501) (Pseudomonas stutzeri)).